We begin with the raw amino-acid sequence, 51 residues long: MSGPLSPVCSCPQLPFMLSPCHMHHHPGHVALSQTVSPASLLTQGLGLPQH.

In terms of tissue distribution, highly expressed in pancreas, heart and liver followed by brain, placenta, lung, skeletal muscle and kidney. Mostly expressed in females.

In Homo sapiens (Human), this protein is Putative inactivation escape 1 protein (INE1).